A 549-amino-acid chain; its full sequence is MAAKEVKFGDSARERMVAGVNVLANAVKVTLGPKGRNVVLERSFGAPTVTKDGVSVAKEIELKDKFENMGAQMVKEVASKTSDIAGDGTTTATVLAQSIVREGMKFVAAGMNPMDLKRGIDKAVVATIEELKKLSKPCSTNKEIAQVGSISANSDADIGGIIAQAMEKVGKEGVITVEDGKSLNNELDVVEGMQFDRGYLSPYFINNPDKQVAILENPFVLLFDKKISNIRDLLPVLEQVAKAGRPLLIIAEDVDGEALATLVVNNIRGILKTCAVKAPGFGDRRKAMLEDIAILTGGQVIAEEVGLTLEKATLQDLGQAKRIEIGKENTIIIDGAGEASRIEARVKQIRVQIEEATSDYDREKLQERVAKLAGGVAVIKVGAATEVEMKEKKARVEDALHATRAAVEEGIVPGGGVALLRARASLAGLKGDNHDQDAGIKIVLRAMEQPLREIVANAGDEASVVVNKVVEGSGNFGYNAATGEYGDMVEMGVLDPTKVTRTALQNAASVASLMLTTDCMVGELAEDKPAGGMPGMGGMGGMGGMDMGM.

ATP contacts are provided by residues 30–33 (TLGP), Lys-51, 87–91 (DGTTT), Gly-415, 479–481 (NAA), and Asp-495.

This sequence belongs to the chaperonin (HSP60) family. In terms of assembly, forms a cylinder of 14 subunits composed of two heptameric rings stacked back-to-back. Interacts with the co-chaperonin GroES.

Its subcellular location is the cytoplasm. The catalysed reaction is ATP + H2O + a folded polypeptide = ADP + phosphate + an unfolded polypeptide.. In terms of biological role, together with its co-chaperonin GroES, plays an essential role in assisting protein folding. The GroEL-GroES system forms a nano-cage that allows encapsulation of the non-native substrate proteins and provides a physical environment optimized to promote and accelerate protein folding. This is Chaperonin GroEL 1 from Azoarcus sp. (strain BH72).